A 1399-amino-acid chain; its full sequence is DNA-directed RNA polymerase subunit beta' (1399 aa).

Cys-70, Cys-72, Cys-85, and Cys-88 together coordinate Zn(2+). Residues Asp-460, Asp-462, and Asp-464 each contribute to the Mg(2+) site. Cys-814, Cys-888, Cys-895, and Cys-898 together coordinate Zn(2+). A disordered region spans residues 1367–1399 (SERKRQRDLGKPQRVSASEAEAALTEALNSSGN). The span at 1382–1399 (SASEAEAALTEALNSSGN) shows a compositional bias: low complexity.

This sequence belongs to the RNA polymerase beta' chain family. As to quaternary structure, the RNAP catalytic core consists of 2 alpha, 1 beta, 1 beta' and 1 omega subunit. When a sigma factor is associated with the core the holoenzyme is formed, which can initiate transcription. Mg(2+) serves as cofactor. It depends on Zn(2+) as a cofactor.

It carries out the reaction RNA(n) + a ribonucleoside 5'-triphosphate = RNA(n+1) + diphosphate. Functionally, DNA-dependent RNA polymerase catalyzes the transcription of DNA into RNA using the four ribonucleoside triphosphates as substrates. This chain is DNA-directed RNA polymerase subunit beta', found in Pseudomonas paraeruginosa (strain DSM 24068 / PA7) (Pseudomonas aeruginosa (strain PA7)).